The primary structure comprises 288 residues: MQVIIISGLSGSGKSIALKALEDSGYYCVDNLPASLLVILINHLQTQHHSHVAVAIDMRSGDSITVLPWQFKMIDKSIRTEFIFLDTRTDTLIQRFSETRRRHPLSDKNITLEEAIQHEREVLATVSDLGHHIDTSSLRPNALRAFIRDFISDSRDPSQLTLMFQSFGYKHGIPLDADLVFDIRCLPNPFYDPHLKELTGHDLEVIRFMEAQPNAAKMLGDIGSFLDTWLPVYMQDNRAYLTVAIGCTGGQHRSVYFAEKLALHFRDAARVLVRHRGLAEYNQYYARR.

Residue 8 to 15 (GLSGSGKS) coordinates ATP. GTP is bound at residue 57-60 (DMRS).

Belongs to the RapZ-like family.

Functionally, displays ATPase and GTPase activities. The protein is Nucleotide-binding protein Neut_1559 of Nitrosomonas eutropha (strain DSM 101675 / C91 / Nm57).